A 203-amino-acid polypeptide reads, in one-letter code: Nucleoside triphosphate pyrophosphatase (203 aa).

The Proton acceptor role is filled by aspartate 78.

It belongs to the Maf family. A divalent metal cation is required as a cofactor.

It localises to the cytoplasm. The catalysed reaction is a ribonucleoside 5'-triphosphate + H2O = a ribonucleoside 5'-phosphate + diphosphate + H(+). It carries out the reaction a 2'-deoxyribonucleoside 5'-triphosphate + H2O = a 2'-deoxyribonucleoside 5'-phosphate + diphosphate + H(+). Nucleoside triphosphate pyrophosphatase. May have a dual role in cell division arrest and in preventing the incorporation of modified nucleotides into cellular nucleic acids. The polypeptide is Nucleoside triphosphate pyrophosphatase (Prochlorococcus marinus (strain MIT 9301)).